We begin with the raw amino-acid sequence, 917 residues long: Alanine--tRNA ligase (917 aa).

The Zn(2+) site is built by His-615, His-619, Cys-719, and His-723.

The protein belongs to the class-II aminoacyl-tRNA synthetase family. Requires Zn(2+) as cofactor.

Its subcellular location is the cytoplasm. The enzyme catalyses tRNA(Ala) + L-alanine + ATP = L-alanyl-tRNA(Ala) + AMP + diphosphate. In terms of biological role, catalyzes the attachment of alanine to tRNA(Ala) in a two-step reaction: alanine is first activated by ATP to form Ala-AMP and then transferred to the acceptor end of tRNA(Ala). Also edits incorrectly charged Ser-tRNA(Ala) and Gly-tRNA(Ala) via its editing domain. This Thermococcus kodakarensis (strain ATCC BAA-918 / JCM 12380 / KOD1) (Pyrococcus kodakaraensis (strain KOD1)) protein is Alanine--tRNA ligase.